Here is a 163-residue protein sequence, read N- to C-terminus: Nuclear cap-binding protein subunit 2 (163 aa).

MRNA-binding positions include Y18, Y41, 110–114 (RVDWD), 121–125 (RQYGR), and 131–132 (QV). The 79-residue stretch at 38–116 (STLYVGNLSF…RIVRVDWDAG (79 aa)) folds into the RRM domain.

It belongs to the RRM NCBP2 family. In terms of assembly, component of the nuclear cap-binding complex (CBC), a heterodimer composed of Cbp80 and Cbp20 that interacts with m7GpppG-capped RNA.

The protein localises to the nucleus. Its function is as follows. Component of the cap-binding complex (CBC), which binds co-transcriptionally to the 5' cap of pre-mRNAs and is involved in various processes such as pre-mRNA splicing and RNA-mediated gene silencing (RNAi). The CBC complex is involved in miRNA-mediated RNA interference and is required for primary microRNAs (miRNAs) processing. Also involved in innate immunity via the short interfering RNAs (siRNAs) processing machinery by restricting the viral RNA production. In the CBC complex, Cbp20 recognizes and binds capped RNAs (m7GpppG-capped RNA) but requires Cbp80 to stabilize the movement of its N-terminal loop and lock the CBC into a high affinity cap-binding state with the cap structure. The sequence is that of Nuclear cap-binding protein subunit 2 (Cbp20) from Anopheles gambiae (African malaria mosquito).